A 220-amino-acid chain; its full sequence is Large ribosomal subunit protein uL3 (220 aa).

It belongs to the universal ribosomal protein uL3 family. As to quaternary structure, part of the 50S ribosomal subunit. Forms a cluster with proteins L14 and L19.

Its function is as follows. One of the primary rRNA binding proteins, it binds directly near the 3'-end of the 23S rRNA, where it nucleates assembly of the 50S subunit. The polypeptide is Large ribosomal subunit protein uL3 (Staphylococcus haemolyticus (strain JCSC1435)).